The following is a 190-amino-acid chain: Selenoprotein S (190 aa).

Residues 28 to 48 (SLLASYGWYILFSCILLYIVI) form a helical membrane-spanning segment. Positions 78–90 (RQEALAAARLRMQ) are VCP/p97-interacting motif (VIM). The tract at residues 115-190 (KIEMWDSMQE…RRGPSSGGUN (76 aa)) is disordered. Over residues 160–174 (RGGGYNPLTGEGGGT) the composition is skewed to gly residues. Position 189 (Sec189) is a non-standard amino acid, selenocysteine.

It belongs to the selenoprotein S family. Interacts with DERL1 and (via VIM motif) with VCP, suggesting that it forms a membrane complex with DERL1 that serves as a receptor for VCP. Also interacts with DERL2, DERL3 and SELENOK. The SELENOK-SELENOS complex interacts with VCP. Interacts with CCDC47. Post-translationally, truncated SELENOS proteins produced by failed UGA/Sec decoding are ubiquitinated by the CRL2(KLHDC2) and CRL2(KLHDC3) complexes, which recognizes the glycine (Gly) at the C-terminus of truncated SELENOS proteins. Truncated SELENOS proteins produced by failed UGA/Sec decoding are also ubiquitinated by the CRL5(KLHDC1) complex.

It localises to the endoplasmic reticulum membrane. It is found in the cytoplasm. Its function is as follows. Involved in the degradation process of misfolded endoplasmic reticulum (ER) luminal proteins. Participates in the transfer of misfolded proteins from the ER to the cytosol, where they are destroyed by the proteasome in a ubiquitin-dependent manner. Probably acts by serving as a linker between DERL1, which mediates the retrotranslocation of misfolded proteins into the cytosol, and the ATPase complex VCP, which mediates the translocation and ubiquitination. This Mus musculus (Mouse) protein is Selenoprotein S.